Reading from the N-terminus, the 1373-residue chain is DNA-directed RNA polymerase subunit beta (1373 aa).

The protein belongs to the RNA polymerase beta chain family. In terms of assembly, the RNAP catalytic core consists of 2 alpha, 1 beta, 1 beta' and 1 omega subunit. When a sigma factor is associated with the core the holoenzyme is formed, which can initiate transcription.

It catalyses the reaction RNA(n) + a ribonucleoside 5'-triphosphate = RNA(n+1) + diphosphate. DNA-dependent RNA polymerase catalyzes the transcription of DNA into RNA using the four ribonucleoside triphosphates as substrates. The protein is DNA-directed RNA polymerase subunit beta of Rickettsia rickettsii (strain Iowa).